The chain runs to 266 residues: Inositol-1-monophosphatase (266 aa).

Residues Glu-69, Asp-86, Leu-88, and Asp-89 each contribute to the Mg(2+) site. Glu-69 contacts substrate. Substrate is bound by residues 88–91 (LDGT), Arg-185, and Asp-214. Asp-214 lines the Mg(2+) pocket.

This sequence belongs to the inositol monophosphatase superfamily. The cofactor is Mg(2+).

It carries out the reaction a myo-inositol phosphate + H2O = myo-inositol + phosphate. In Rhizobium meliloti (strain 1021) (Ensifer meliloti), this protein is Inositol-1-monophosphatase (suhB).